The sequence spans 160 residues: Phosphopantetheine adenylyltransferase (160 aa).

Ser9 contacts substrate. ATP contacts are provided by residues 9-10 and His17; that span reads SF. Positions 41, 73, and 87 each coordinate substrate. ATP contacts are provided by residues 88-90, Glu98, and 123-129; these read GMR and YTFFSSS.

The protein belongs to the bacterial CoaD family. In terms of assembly, homohexamer. It depends on Mg(2+) as a cofactor.

It is found in the cytoplasm. It carries out the reaction (R)-4'-phosphopantetheine + ATP + H(+) = 3'-dephospho-CoA + diphosphate. It participates in cofactor biosynthesis; coenzyme A biosynthesis; CoA from (R)-pantothenate: step 4/5. Its function is as follows. Reversibly transfers an adenylyl group from ATP to 4'-phosphopantetheine, yielding dephospho-CoA (dPCoA) and pyrophosphate. In Roseiflexus castenholzii (strain DSM 13941 / HLO8), this protein is Phosphopantetheine adenylyltransferase.